The following is an 81-amino-acid chain: Elongation factor 1-beta (81 aa).

It belongs to the EF-1-beta/EF-1-delta family.

Functionally, promotes the exchange of GDP for GTP in EF-1-alpha/GDP, thus allowing the regeneration of EF-1-alpha/GTP that could then be used to form the ternary complex EF-1-alpha/GTP/AAtRNA. In Nanoarchaeum equitans (strain Kin4-M), this protein is Elongation factor 1-beta.